Consider the following 156-residue polypeptide: Small ribosomal subunit protein uS7 (156 aa).

It belongs to the universal ribosomal protein uS7 family. Part of the 30S ribosomal subunit. Contacts proteins S9 and S11.

One of the primary rRNA binding proteins, it binds directly to 16S rRNA where it nucleates assembly of the head domain of the 30S subunit. Is located at the subunit interface close to the decoding center, probably blocks exit of the E-site tRNA. This Brevibacillus brevis (strain 47 / JCM 6285 / NBRC 100599) protein is Small ribosomal subunit protein uS7.